Reading from the N-terminus, the 284-residue chain is uncharacterized protein (284 aa).

The N-terminal stretch at methionine 1–alanine 23 is a signal peptide.

This sequence belongs to the surface antigen msp4 family.

This is an uncharacterized protein from Brucella abortus (strain 2308).